The chain runs to 355 residues: DNA polymerase IV (355 aa).

One can recognise a UmuC domain in the interval 14-198 (IIHVDMDAFF…LPVEKFHGVG (185 aa)). Mg(2+)-binding residues include Asp18 and Asp116. The active site involves Glu117.

It belongs to the DNA polymerase type-Y family. Monomer. Requires Mg(2+) as cofactor.

It localises to the cytoplasm. The catalysed reaction is DNA(n) + a 2'-deoxyribonucleoside 5'-triphosphate = DNA(n+1) + diphosphate. Poorly processive, error-prone DNA polymerase involved in untargeted mutagenesis. Copies undamaged DNA at stalled replication forks, which arise in vivo from mismatched or misaligned primer ends. These misaligned primers can be extended by PolIV. Exhibits no 3'-5' exonuclease (proofreading) activity. May be involved in translesional synthesis, in conjunction with the beta clamp from PolIII. This is DNA polymerase IV from Streptococcus suis (strain 98HAH33).